The following is a 160-amino-acid chain: Phosphopantetheine adenylyltransferase (160 aa).

Thr-9 provides a ligand contact to substrate. Residues 9–10 (TF) and His-17 contribute to the ATP site. Substrate-binding residues include Lys-41, Leu-73, and Arg-87. Residues 88-90 (GLR), Glu-98, and 123-129 (LSYISST) contribute to the ATP site.

This sequence belongs to the bacterial CoaD family. In terms of assembly, homohexamer. Mg(2+) serves as cofactor.

It is found in the cytoplasm. The catalysed reaction is (R)-4'-phosphopantetheine + ATP + H(+) = 3'-dephospho-CoA + diphosphate. It participates in cofactor biosynthesis; coenzyme A biosynthesis; CoA from (R)-pantothenate: step 4/5. Functionally, reversibly transfers an adenylyl group from ATP to 4'-phosphopantetheine, yielding dephospho-CoA (dPCoA) and pyrophosphate. In Marinobacter nauticus (strain ATCC 700491 / DSM 11845 / VT8) (Marinobacter aquaeolei), this protein is Phosphopantetheine adenylyltransferase.